Reading from the N-terminus, the 281-residue chain is Undecaprenyl-diphosphatase (281 aa).

The next 7 membrane-spanning stretches (helical) occupy residues 45–65 (AFTNMFNVVIQLGAILAVVVI), 86–106 (WQLWAKVILSALPAAVIGLIF), 114–134 (FQNFFSVALMLILYGIAFIYV), 148–168 (LVSLPYKTAFFIGLFQVLSLI), 196–216 (FFLGIPIMFGASLVKVLKFIV), 224–244 (SQLFILLVAMLVAFAVSLYVI), and 256–276 (FTFFGKYRIGLGILLLFYGLM).

Belongs to the UppP family.

The protein resides in the cell membrane. It catalyses the reaction di-trans,octa-cis-undecaprenyl diphosphate + H2O = di-trans,octa-cis-undecaprenyl phosphate + phosphate + H(+). In terms of biological role, catalyzes the dephosphorylation of undecaprenyl diphosphate (UPP). Confers resistance to bacitracin. The chain is Undecaprenyl-diphosphatase from Streptococcus mutans serotype c (strain ATCC 700610 / UA159).